The sequence spans 570 residues: Sulfite reductase [NADPH] hemoprotein beta-component (570 aa).

[4Fe-4S] cluster is bound by residues cysteine 434, cysteine 440, cysteine 479, and cysteine 483. Cysteine 483 is a binding site for siroheme.

The protein belongs to the nitrite and sulfite reductase 4Fe-4S domain family. Alpha(8)-beta(8). The alpha component is a flavoprotein, the beta component is a hemoprotein. Siroheme is required as a cofactor. Requires [4Fe-4S] cluster as cofactor.

It catalyses the reaction hydrogen sulfide + 3 NADP(+) + 3 H2O = sulfite + 3 NADPH + 4 H(+). It functions in the pathway sulfur metabolism; hydrogen sulfide biosynthesis; hydrogen sulfide from sulfite (NADPH route): step 1/1. In terms of biological role, component of the sulfite reductase complex that catalyzes the 6-electron reduction of sulfite to sulfide. This is one of several activities required for the biosynthesis of L-cysteine from sulfate. This is Sulfite reductase [NADPH] hemoprotein beta-component from Shigella boydii serotype 4 (strain Sb227).